A 455-amino-acid polypeptide reads, in one-letter code: Anaerobic glycerol-3-phosphate dehydrogenase subunit B (455 aa).

It belongs to the anaerobic G-3-P dehydrogenase subunit B family. Composed of a catalytic GlpA/B dimer and of membrane bound GlpC. Requires FMN as cofactor.

The enzyme catalyses a quinone + sn-glycerol 3-phosphate = dihydroxyacetone phosphate + a quinol. Its pathway is polyol metabolism; glycerol degradation via glycerol kinase pathway; glycerone phosphate from sn-glycerol 3-phosphate (anaerobic route): step 1/1. Conversion of glycerol 3-phosphate to dihydroxyacetone. Uses fumarate or nitrate as electron acceptor. The polypeptide is Anaerobic glycerol-3-phosphate dehydrogenase subunit B (Aliivibrio fischeri (strain ATCC 700601 / ES114) (Vibrio fischeri)).